The primary structure comprises 476 residues: MAPVSLPPGFRFHPTDEELITYYLKRKINGQEIELEIIPEVDLYKCEPWDLPGKSLIPSKDQEWFFFSPRDRKYPNGSRTNRATKGGYWKATGKDRRVSWRDRAIGTKKTLVYYRGRAPHGIRTGWVMHEYRLDESECEPSAFGMQDAYALCRVFKKIVIEAKPRDQHQQQHQPYVHTSSNISGSSSFDVCSDLEISSNTPYNTAAHIQPRFGNANAISDHDDWSQYLSQNMPTSFSDYGSPYGPYLTQSKVNTEVQCEMFQHQMSLPPLRVENSQAQTSDFSKRLHQNSGQSGFDDFTFAASNSNQFYNSNVDDHLIHIGNLDEQSYIEEQELILPSFQSNDQDLELYGGSRTNTIDNIEIDDFFSFENQAQDNDNSNVTPNSAGFEMIGEEIIVNHKMLISTRQTTEILYYQVVPSQILKIHINPVHGNEERTMLMEEDSDDSWFQKAENVAKMKLKQISLVAKRYYKCLTIIF.

Residues 6 to 157 (LPPGFRFHPT…AYALCRVFKK (152 aa)) enclose the NAC domain. The DNA-binding element occupies 105–163 (IGTKKTLVYYRGRAPHGIRTGWVMHEYRLDESECEPSAFGMQDAYALCRVFKKIVIEAK).

In terms of tissue distribution, expressed in a few sieve element cells before enucleation and in phloem-pole pericycle cells.

Its subcellular location is the nucleus. Transcription factor directing sieve element enucleation and cytosol degradation. Not required for formation of lytic vacuoles. Regulates, with NAC045, the transcription of NEN1, NEN2, NEN3, NEN4, RTM1, RTM2, UBP16, PLDZETA, ABCB10 and At1g26450. This Arabidopsis thaliana (Mouse-ear cress) protein is NAC domain-containing protein 86.